Here is a 340-residue protein sequence, read N- to C-terminus: Probable sugar phosphate/phosphate translocator At3g14410 (340 aa).

Transmembrane regions (helical) follow at residues 12–32 (EFVT…QIFF), 44–64 (FPYP…LCFL), 80–100 (LEIY…TLWL), 110–130 (VAFA…LGVA), 141–161 (LLIM…ELNI), 163–183 (WIGV…LIFM), 197–217 (ISLM…PWIF), 234–254 (VVLT…FLVI), 260–282 (LTIR…LLFA), and 286–305 (LTII…AAYN). Residues 320-340 (ETPGDAESIPLVSQGNTNTER) form a disordered region. Residues 330–340 (LVSQGNTNTER) show a composition bias toward polar residues.

This sequence belongs to the TPT transporter family. TPT (TC 2.A.7.9) subfamily.

The protein resides in the membrane. The polypeptide is Probable sugar phosphate/phosphate translocator At3g14410 (Arabidopsis thaliana (Mouse-ear cress)).